The primary structure comprises 308 residues: Adult enhancer factor 1 (308 aa).

2 disordered regions span residues 50–94 and 123–143; these read AHMA…PLPF and QAAA…THLT. Low complexity predominate over residues 56–76; that stretch reads QQQQQQQQQQQQQHHQQQQQQ. A compositionally biased stretch (pro residues) spans 81–90; sequence PSVPPPPTEL. 4 C2H2-type zinc fingers span residues 184–206, 212–234, 240–262, and 268–290; these read FHCT…VKIH, YKCN…LKIH, YNCN…VKIH, and FECV…IKIH.

As to expression, found in all tissues examined including the ovary and the fat body.

Its subcellular location is the nucleus. Its function is as follows. Transcriptional repressor that binds specifically to fat body-specific enhancers, namely the adult ADH enhancer (AAE) and the enhancer that controls yolk protein gene expression. This Drosophila melanogaster (Fruit fly) protein is Adult enhancer factor 1 (Aef1).